The primary structure comprises 135 residues: HTH-type transcriptional activator AarP (135 aa).

One can recognise an HTH araC/xylS-type domain in the interval 22-120 (SEILVWIEGN…GISPSLYRLS (99 aa)). 2 consecutive DNA-binding regions (H-T-H motif) follow at residues 39-60 (DDIAQHSGYTKWHLQRVFRKIV) and 87-110 (VIDIALKYQFDSQQSFAKRFKAYL).

Transcriptional activator of 2'-N-acetyltransferase. This chain is HTH-type transcriptional activator AarP (aarP), found in Providencia stuartii.